We begin with the raw amino-acid sequence, 498 residues long: Dynein regulatory complex subunit 2 (498 aa).

3 coiled-coil regions span residues 98–160 (VIKS…RKTI), 250–311 (KDEK…KAQR), and 417–441 (SLRHRRAQLLEINEKLREMLRQYLD).

The protein belongs to the DRC2 family. As to quaternary structure, component of the nexin-dynein regulatory complex (N-DRC). Interacts with DRC1.

It is found in the cytoplasm. The protein localises to the cytoskeleton. It localises to the flagellum basal body. Its subcellular location is the cell projection. The protein resides in the cilium. It is found in the flagellum. The protein localises to the flagellum axoneme. Functionally, component of the nexin-dynein regulatory complex (N-DRC), a key regulator of ciliary/flagellar motility which maintains the alignment and integrity of the distal axoneme and regulates microtubule sliding in motile axonemes. Plays a critical role in the assembly of N-DRC and also stabilizes the assembly of multiple inner dynein arms and radial spokes. Coassembles with DRC1 to form a central scaffold needed for assembly of the N-DRC and its attachment to the outer doublet microtubules. The chain is Dynein regulatory complex subunit 2 (CCDC65) from Bos taurus (Bovine).